The chain runs to 679 residues: FAST kinase domain-containing protein 2, mitochondrial (679 aa).

Phosphoserine is present on residues Ser113 and Ser126. In terms of domain architecture, RAP spans 607 to 664 (VAVLCVPKSAYCLNSNHLRGLMAMKIRHLNVMGFHVILIHNWELKKLKMEDAVTFVRK).

It belongs to the FAST kinase family. In terms of assembly, monomer. Found in a complex with GRSF1, DDX28, DHX30 and FASTKD5. Associates with the 16S mitochondrial rRNA (16S mt-rRNA). Forms a regulatory protein-RNA complex, consisting of RCC1L, NGRN, RPUSD3, RPUSD4, TRUB2, FASTKD2 and 16S mt-rRNA.

The protein resides in the mitochondrion matrix. It localises to the mitochondrion nucleoid. Plays an important role in assembly of the mitochondrial large ribosomal subunit. As a component of a functional protein-RNA module, consisting of RCC1L, NGRN, RPUSD3, RPUSD4, TRUB2, FASTKD2 and 16S mitochondrial ribosomal RNA (16S mt-rRNA), controls 16S mt-rRNA abundance and is required for intra-mitochondrial translation. May play a role in mitochondrial apoptosis. In Rattus norvegicus (Rat), this protein is FAST kinase domain-containing protein 2, mitochondrial (Fastkd2).